Consider the following 423-residue polypeptide: Acetylornithine aminotransferase, mitochondrial (423 aa).

K276 carries the post-translational modification N6-(pyridoxal phosphate)lysine.

This sequence belongs to the class-III pyridoxal-phosphate-dependent aminotransferase family. It depends on pyridoxal 5'-phosphate as a cofactor.

The protein localises to the mitochondrion matrix. It carries out the reaction N(2)-acetyl-L-ornithine + 2-oxoglutarate = N-acetyl-L-glutamate 5-semialdehyde + L-glutamate. Its pathway is amino-acid biosynthesis; L-arginine biosynthesis; N(2)-acetyl-L-ornithine from L-glutamate: step 4/4. The sequence is that of Acetylornithine aminotransferase, mitochondrial (ARG8) from Eremothecium gossypii (strain ATCC 10895 / CBS 109.51 / FGSC 9923 / NRRL Y-1056) (Yeast).